A 704-amino-acid chain; its full sequence is DNA ligase (704 aa).

NAD(+) contacts are provided by residues 58-62, 107-108, and glutamate 138; these read DYEYD and SL. Residue lysine 140 is the N6-AMP-lysine intermediate of the active site. Residues arginine 161, glutamate 199, lysine 323, and lysine 347 each coordinate NAD(+). Residues cysteine 441, cysteine 444, cysteine 459, and cysteine 464 each coordinate Zn(2+). A BRCT domain is found at 621 to 704; sequence EKKGKLAGLN…LKLIGGENTE (84 aa).

The protein belongs to the NAD-dependent DNA ligase family. LigA subfamily. The cofactor is Mg(2+). Mn(2+) is required as a cofactor.

The enzyme catalyses NAD(+) + (deoxyribonucleotide)n-3'-hydroxyl + 5'-phospho-(deoxyribonucleotide)m = (deoxyribonucleotide)n+m + AMP + beta-nicotinamide D-nucleotide.. Functionally, DNA ligase that catalyzes the formation of phosphodiester linkages between 5'-phosphoryl and 3'-hydroxyl groups in double-stranded DNA using NAD as a coenzyme and as the energy source for the reaction. It is essential for DNA replication and repair of damaged DNA. This Sulfurihydrogenibium sp. (strain YO3AOP1) protein is DNA ligase.